The sequence spans 663 residues: UvrABC system protein B (663 aa).

The Helicase ATP-binding domain occupies 26–183 (DGLESGLAKQ…KRLAEMQYTR (158 aa)). An ATP-binding site is contributed by 39–46 (GVTGSGKT). The Beta-hairpin motif lies at 92–115 (YYDYYQPEAYVPASDTFIEKDASI). One can recognise a Helicase C-terminal domain in the interval 430 to 596 (QVDDLMSEIR…GINKSVEDIL (167 aa)). One can recognise a UVR domain in the interval 624-659 (AKQINALEKQMYAHAQNMEFELAAKIRDEYLLLKEQ).

It belongs to the UvrB family. In terms of assembly, forms a heterotetramer with UvrA during the search for lesions. Interacts with UvrC in an incision complex.

It is found in the cytoplasm. The UvrABC repair system catalyzes the recognition and processing of DNA lesions. A damage recognition complex composed of 2 UvrA and 2 UvrB subunits scans DNA for abnormalities. Upon binding of the UvrA(2)B(2) complex to a putative damaged site, the DNA wraps around one UvrB monomer. DNA wrap is dependent on ATP binding by UvrB and probably causes local melting of the DNA helix, facilitating insertion of UvrB beta-hairpin between the DNA strands. Then UvrB probes one DNA strand for the presence of a lesion. If a lesion is found the UvrA subunits dissociate and the UvrB-DNA preincision complex is formed. This complex is subsequently bound by UvrC and the second UvrB is released. If no lesion is found, the DNA wraps around the other UvrB subunit that will check the other stand for damage. The polypeptide is UvrABC system protein B (Legionella pneumophila (strain Corby)).